The chain runs to 118 residues: Ribosome-binding factor A (118 aa).

Belongs to the RbfA family. Monomer. Binds 30S ribosomal subunits, but not 50S ribosomal subunits or 70S ribosomes.

It localises to the cytoplasm. Functionally, one of several proteins that assist in the late maturation steps of the functional core of the 30S ribosomal subunit. Associates with free 30S ribosomal subunits (but not with 30S subunits that are part of 70S ribosomes or polysomes). Required for efficient processing of 16S rRNA. May interact with the 5'-terminal helix region of 16S rRNA. The polypeptide is Ribosome-binding factor A (Geobacter metallireducens (strain ATCC 53774 / DSM 7210 / GS-15)).